Reading from the N-terminus, the 89-residue chain is Defensin-like protein 78 (89 aa).

An N-terminal signal peptide occupies residues 1-30; it reads MANNMVASPYKNTFMMIALVLILLISGSEA. Cystine bridges form between Cys-40–Cys-75, Cys-44–Cys-67, Cys-52–Cys-73, and Cys-56–Cys-74.

Belongs to the DEFL family.

It is found in the secreted. In Arabidopsis thaliana (Mouse-ear cress), this protein is Defensin-like protein 78.